The sequence spans 119 residues: Large ribosomal subunit protein uL18 (119 aa).

This sequence belongs to the universal ribosomal protein uL18 family. As to quaternary structure, part of the 50S ribosomal subunit; part of the 5S rRNA/L5/L18/L25 subcomplex. Contacts the 5S and 23S rRNAs.

Its function is as follows. This is one of the proteins that bind and probably mediate the attachment of the 5S RNA into the large ribosomal subunit, where it forms part of the central protuberance. The sequence is that of Large ribosomal subunit protein uL18 from Chlorobium phaeovibrioides (strain DSM 265 / 1930) (Prosthecochloris vibrioformis (strain DSM 265)).